A 126-amino-acid polypeptide reads, in one-letter code: Fatty acid-binding protein, liver (126 aa).

Residues 54 to 56 (TPN), 99 to 101 (HEQ), and Arg121 contribute to the cholate site.

It belongs to the calycin superfamily. Fatty-acid binding protein (FABP) family.

Its subcellular location is the cytoplasm. Its function is as follows. FABPs are thought to play a role in the intracellular transport of long-chain fatty acids and their acyl-CoA esters. This chain is Fatty acid-binding protein, liver, found in Anolis pulchellus (Common grass anole).